The sequence spans 216 residues: Sporozoite antigen (216 aa).

Residues 194–216 (QQQQPSSYGAPPASSQQPSGFFW) form a disordered region.

The protein is Sporozoite antigen of Eimeria tenella (Coccidian parasite).